The following is a 433-amino-acid chain: Beta-agarase AgaA (433 aa).

The signal sequence occupies residues Met-1 to Ala-20. The region spanning Ala-21 to Ile-295 is the GH16 domain. Catalysis depends on Glu-147, which acts as the Nucleophile. Glu-152 acts as the Proton donor in catalysis. Residues Thr-300–Val-431 enclose the CBM6 domain.

The protein belongs to the glycosyl hydrolase 16 family. Monomer.

It localises to the periplasm. It carries out the reaction Hydrolysis of (1-&gt;4)-beta-D-galactosidic linkages in agarose, giving the tetramer as the predominant product.. With respect to regulation, activity is abolished by Hg(2+), Cu(2+), Pb(2+) and Zn(2+) ions, but is not affected by NaCl up to at least 1.0 M, Mg(2+), K(+) and Ca(2+). Not affected by iodoacetamide, p-chloromercuribenzoate, dithiothreitol, 2-mercaptoethanol, EDTA and sodium dodecyl sulfate. Inhibited by N-bromosuccinimide. Its function is as follows. Endo-type beta-agarase, which produces neoagarotetraose (NA4) as the main final product, with a small amount of neoagarohexaose (NA6) and neoagarobiose (NA2). This Microbulbifer thermotolerans protein is Beta-agarase AgaA.